The primary structure comprises 293 residues: Zinc finger protein 80 (293 aa).

2 C2H2-type zinc fingers span residues 69 to 91 and 97 to 119; these read YKCK…HQIH and YECQ…MRIH. The segment at 125-147 adopts a C2H2-type 3; atypical zinc-finger fold; sequence CKCVECGKVFNRRSHLLCYHQIH. C2H2-type zinc fingers lie at residues 153 to 175, 181 to 203, 209 to 231, and 237 to 259; these read YECS…RMTH, FGCK…MKIH, YKCG…SMTH, and YECK…TRSH.

It belongs to the krueppel C2H2-type zinc-finger protein family.

The protein resides in the nucleus. Its function is as follows. May be involved in transcriptional regulation. The protein is Zinc finger protein 80 (ZNF80) of Macaca mulatta (Rhesus macaque).